The sequence spans 236 residues: Ribonuclease 3 (236 aa).

Residues 13-138 (TEKVFKISGY…LIGAIYVDGG (126 aa)) form the RNase III domain. Position 51 (E51) interacts with Mg(2+). Residue D55 is part of the active site. Residues N124 and E127 each coordinate Mg(2+). Residue E127 is part of the active site. The 69-residue stretch at 164–232 (DAKTALQEWA…AKLMLEKVTK (69 aa)) folds into the DRBM domain.

This sequence belongs to the ribonuclease III family. Homodimer. It depends on Mg(2+) as a cofactor.

The protein resides in the cytoplasm. The catalysed reaction is Endonucleolytic cleavage to 5'-phosphomonoester.. In terms of biological role, digests double-stranded RNA. Involved in the processing of primary rRNA transcript to yield the immediate precursors to the large and small rRNAs (23S and 16S). Processes some mRNAs, and tRNAs when they are encoded in the rRNA operon. Processes pre-crRNA and tracrRNA of type II CRISPR loci if present in the organism. The protein is Ribonuclease 3 of Anaplasma phagocytophilum (strain HZ).